Reading from the N-terminus, the 396-residue chain is E3 ubiquitin-protein transferase MAEA (396 aa).

The region spanning 121–153 is the LisH domain; the sequence is KKKRMDRMMVEHLLRCGYYNTAVKLARQSEIED. The CTLH domain maps to 159 to 216; that stretch reads MFLTAKEVEESLERQETMTCLAWCHDNKSRLRKMKSCLEFSLRIQEFIELIRQNKRLD. The RING-Gid-type zinc-finger motif lies at 314–381; it reads CPVCSKSLNK…QDDKVVCPRT (68 aa).

As to quaternary structure, identified in the CTLH complex that contains at least MAEA, RMND5A, GID8, WDR26, and RANBP9 and/or RANBP10 as the catalytic core. Interacts with F-actin.

It is found in the nucleus matrix. The protein localises to the cell membrane. The protein resides in the cytoplasm. It localises to the cytoskeleton. The enzyme catalyses S-ubiquitinyl-[E2 ubiquitin-conjugating enzyme]-L-cysteine + [acceptor protein]-L-lysine = [E2 ubiquitin-conjugating enzyme]-L-cysteine + N(6)-ubiquitinyl-[acceptor protein]-L-lysine.. Functionally, core component of the CTLH E3 ubiquitin-protein ligase complex that selectively accepts ubiquitin from UBE2H and mediates ubiquitination and subsequent proteasomal degradation of the transcription factor HBP1. MAEA and RMND5A are both required for catalytic activity of the CTLH E3 ubiquitin-protein ligase complex. MAEA is required for normal cell proliferation. The CTLH E3 ubiquitin-protein ligase complex is not required for the degradation of enzymes involved in gluconeogenesis, such as FBP1. Plays a role in erythroblast maturation and in the development of mature macrophages. Mediates the attachment of erythroid cell to mature macrophages; this MAEA-mediated contact inhibits erythroid cell apoptosis. Participates in erythroblastic island formation, which is the functional unit of definitive erythropoiesis. Associates with F-actin to regulate actin distribution in erythroblasts and macrophages. May contribute to nuclear architecture and cells division events. The protein is E3 ubiquitin-protein transferase MAEA (maea) of Xenopus laevis (African clawed frog).